A 478-amino-acid polypeptide reads, in one-letter code: Proline--tRNA ligase (478 aa).

Belongs to the class-II aminoacyl-tRNA synthetase family. ProS type 3 subfamily. As to quaternary structure, homodimer.

Its subcellular location is the cytoplasm. It catalyses the reaction tRNA(Pro) + L-proline + ATP = L-prolyl-tRNA(Pro) + AMP + diphosphate. In terms of biological role, catalyzes the attachment of proline to tRNA(Pro) in a two-step reaction: proline is first activated by ATP to form Pro-AMP and then transferred to the acceptor end of tRNA(Pro). The polypeptide is Proline--tRNA ligase (Oceanobacillus iheyensis (strain DSM 14371 / CIP 107618 / JCM 11309 / KCTC 3954 / HTE831)).